The following is a 273-amino-acid chain: MALNSINTNAGAMIALQNLNGTNSELTTVQQRINTGKKIASAKDNGAIWATAKNQSATAASMNAVKDSLQRGQSTIDVALAAGDTITDLLGKMKEKALAASDTSLNTASFNALKSDFDSLRDQIEKAATNAKFNGVSIADGSTTKLTFLANSDGSGFTVNAKTISLAGIGLTTTSTFTTAAAAKTMIGTIDTALQTATNKLASLGTSSVGLDTHLTFVGKLQDSLDAGVGNLVDADLAKESAKLQSLQTKQQLGVQALSIANQSSSSILSLFR.

It belongs to the bacterial flagellin family. As to quaternary structure, in C.crescentus, the flagellar filament is composed of multiple flagellins of 29 kDa; 27 kDa and 25 kDa.

It localises to the secreted. The protein resides in the bacterial flagellum. In terms of biological role, flagellin is the subunit protein which polymerizes to form the filaments of bacterial flagella. The polypeptide is Flagellin FljK (fljK) (Caulobacter vibrioides (strain ATCC 19089 / CIP 103742 / CB 15) (Caulobacter crescentus)).